The sequence spans 561 residues: Asparagine synthetase [glutamine-hydrolyzing] (561 aa).

Cysteine 2 (for GATase activity) is an active-site residue. Residues 2–191 (CGIWALFGSD…PGHYEVLDLK (190 aa)) form the Glutamine amidotransferase type-2 domain. L-glutamine is bound by residues 49-53 (RLAVV), 75-77 (NGE), and aspartate 97. Positions 213-536 (HAIYDSVEKL…PGRADWLTHY (324 aa)) constitute an Asparagine synthetase domain. Residues leucine 256, isoleucine 288, and 363–364 (SG) each bind ATP. An N6-acetyllysine modification is found at lysine 385. Threonine 545 bears the Phosphothreonine mark. Serine 557 bears the Phosphoserine mark.

The enzyme catalyses L-aspartate + L-glutamine + ATP + H2O = L-asparagine + L-glutamate + AMP + diphosphate + H(+). The protein operates within amino-acid biosynthesis; L-asparagine biosynthesis; L-asparagine from L-aspartate (L-Gln route): step 1/1. The sequence is that of Asparagine synthetase [glutamine-hydrolyzing] (Asns) from Mus musculus (Mouse).